Here is a 356-residue protein sequence, read N- to C-terminus: OVARIAN TUMOR DOMAIN-containing deubiquitinating enzyme 10 (356 aa).

The tract at residues 86–117 is disordered; sequence DYSHQNQQQQHQQEGYTNNYSNNNNGYAWNDQ. The segment covering 89 to 115 has biased composition (low complexity); sequence HQNQQQQHQQEGYTNNYSNNNNGYAWN. In terms of domain architecture, OTU spans 213-337; that stretch reads FTEVKVPGDG…EVHYNAIYLN (125 aa). Asp-221 is a catalytic residue. The Nucleophile role is filled by Cys-224. His-330 is a catalytic residue.

The protein belongs to the peptidase C85 family.

It carries out the reaction Thiol-dependent hydrolysis of ester, thioester, amide, peptide and isopeptide bonds formed by the C-terminal Gly of ubiquitin (a 76-residue protein attached to proteins as an intracellular targeting signal).. In terms of biological role, hydrolase that can remove conjugated ubiquitin from proteins in vitro and may therefore play an important regulatory role at the level of protein turnover by preventing degradation. Cysteine protease with a preference for 'Lys-63' over 'Lys-48' over 'Met-1' -linked ubiquitin (UB) tetramers as substrates. Also cleaves RUB-GST fusion. This chain is OVARIAN TUMOR DOMAIN-containing deubiquitinating enzyme 10, found in Arabidopsis thaliana (Mouse-ear cress).